Reading from the N-terminus, the 249-residue chain is BPI fold-containing family A member 2 (249 aa).

The first 18 residues, 1–18 (MLQLWKLVLLCGVLTGTS), serve as a signal peptide directing secretion. N-linked (GlcNAc...) asparagine glycosylation is found at Asn124 and Asn132. Cys174 and Cys217 are joined by a disulfide.

It belongs to the BPI/LBP/Plunc superfamily. Plunc family. Detected in submandibular gland. Secreted into saliva.

It localises to the secreted. Its function is as follows. Has strong antibacterial activity against P.aeruginosa. The sequence is that of BPI fold-containing family A member 2 (BPIFA2) from Homo sapiens (Human).